We begin with the raw amino-acid sequence, 274 residues long: Putative homeobox protein Meis3-like 1 (274 aa).

The region spanning 12-65 (GGDVCSSDSFNEDNTAFAKQVRSERPFFSSNPELDNLMIQAIQVLRFHLLELEK) is the MEIS N-terminal domain. Disordered stretches follow at residues 108–167 (DSGS…KRGI) and 228–248 (NRTG…GYTE). Residues 123-135 (GLASQSGDNSSDQ) show a composition bias toward polar residues. Residues 161 to 223 (RNKKRGIFPK…NARRRIVQPM (63 aa)) constitute a DNA-binding region (homeobox).

The protein belongs to the TALE/MEIS homeobox family.

It is found in the nucleus. The polypeptide is Putative homeobox protein Meis3-like 1 (MEIS3P1) (Homo sapiens (Human)).